A 409-amino-acid polypeptide reads, in one-letter code: MARQKFDGNKPHVNIGTIGHVDHGKTTLTAAITTALASQGKGKARKYDEIDAAPEEKARGITINTAHVEYETEKRHYAHVDCPGHADYVKNMITGAAQMDGAILVVSAADGPMPQTREHILLAKQVGVPNMVVFLNKEDQIDDADLLELVELEVRELLSKYDFPGDQIPFVSGSALLALESLSSNPKLMRGEDKWVDKILALMDAVDEYIPTPERPIDKSFLMAIEDVFSITGRGTVATGRIERGAIKVGETVELVGLKDTKSTTVTGLEMFQKTLEEGMAGDNIGILLRGVQKTDIERGMVLAKPGSITPHTQFESEVYVLTKDEGGRHTPFFSGYRPQFYVRTTDVTGSIDAFTADDGSNAEMVMPGDRIKMTVSLVHPIAIEQGMRFAIREGGRTIGAGVVSKILK.

The tr-type G domain maps to 10–214; it reads KPHVNIGTIG…AVDEYIPTPE (205 aa). Residues 19–26 form a G1 region; it reads GHVDHGKT. 19 to 26 is a binding site for GTP; that stretch reads GHVDHGKT. Residue Thr-26 coordinates Mg(2+). The segment at 60–64 is G2; that stretch reads GITIN. The G3 stretch occupies residues 81 to 84; the sequence is DCPG. GTP-binding positions include 81–85 and 136–139; these read DCPGH and NKED. Residues 136–139 form a G4 region; that stretch reads NKED. The G5 stretch occupies residues 174-176; it reads SAL.

This sequence belongs to the TRAFAC class translation factor GTPase superfamily. Classic translation factor GTPase family. EF-Tu/EF-1A subfamily.

The protein resides in the plastid. Its subcellular location is the cyanelle. The catalysed reaction is GTP + H2O = GDP + phosphate + H(+). Functionally, GTP hydrolase that promotes the GTP-dependent binding of aminoacyl-tRNA to the A-site of ribosomes during protein biosynthesis. The chain is Elongation factor Tu, cyanelle (tufA) from Cyanophora paradoxa.